A 525-amino-acid polypeptide reads, in one-letter code: 2,3-bisphosphoglycerate-independent phosphoglycerate mutase (525 aa).

Residues D15 and S65 each contribute to the Mn(2+) site. The active-site Phosphoserine intermediate is the S65. Substrate-binding positions include H126, 156-157, R188, R194, 258-261, and K331; these read RD and RPDR. Mn(2+) contacts are provided by D398, H402, D439, H440, and H457.

It belongs to the BPG-independent phosphoglycerate mutase family. As to quaternary structure, monomer. Requires Mn(2+) as cofactor.

The catalysed reaction is (2R)-2-phosphoglycerate = (2R)-3-phosphoglycerate. It participates in carbohydrate degradation; glycolysis; pyruvate from D-glyceraldehyde 3-phosphate: step 3/5. Functionally, catalyzes the interconversion of 2-phosphoglycerate and 3-phosphoglycerate. In Picosynechococcus sp. (strain ATCC 27264 / PCC 7002 / PR-6) (Agmenellum quadruplicatum), this protein is 2,3-bisphosphoglycerate-independent phosphoglycerate mutase.